The chain runs to 576 residues: Alkaline phosphatase PhoD (576 aa).

The signal sequence occupies residues 1–32 (MNSLLHHSFLKTVFSSLAIAIVTSSLSSVTIA). Zn(2+)-binding residues include Asp-68 and Thr-107. Residue Thr-107 is the Phosphothreonine intermediate of the active site. A disulfide bridge links Cys-108 with Cys-144. Substrate-binding positions include Asn-128 and 188–190 (KDR). A disulfide bridge links Cys-248 with Cys-332. Positions 318, 322, 363, 364, and 508 each coordinate Zn(2+). A disulfide bridge links Cys-562 with Cys-573.

In terms of assembly, monomer. It depends on Zn(2+) as a cofactor.

The enzyme catalyses a phosphate monoester + H2O = an alcohol + phosphate. Functionally, alkaline phosphatase with broad substrate specificity. Has phosphatase activity towards nucleotide and sugar phosphates with a preference to nucleotide phosphates. Has no phosphodiesterase activity. This chain is Alkaline phosphatase PhoD, found in Zymomonas mobilis subsp. mobilis (strain ATCC 31821 / ZM4 / CP4).